A 379-amino-acid polypeptide reads, in one-letter code: Queuine tRNA-ribosyltransferase (379 aa).

Aspartate 94 (proton acceptor) is an active-site residue. Substrate-binding positions include 94–98, aspartate 148, glutamine 191, and glycine 218; that span reads DSGGF. Residues 249–255 are RNA binding; it reads GVGSPDS. The active-site Nucleophile is aspartate 268. An RNA binding; important for wobble base 34 recognition region spans residues 273 to 277; it reads TRIGR. The Zn(2+) site is built by cysteine 306, cysteine 308, cysteine 311, and histidine 337.

This sequence belongs to the queuine tRNA-ribosyltransferase family. In terms of assembly, homodimer. Within each dimer, one monomer is responsible for RNA recognition and catalysis, while the other monomer binds to the replacement base PreQ1. The cofactor is Zn(2+).

It carries out the reaction 7-aminomethyl-7-carbaguanine + guanosine(34) in tRNA = 7-aminomethyl-7-carbaguanosine(34) in tRNA + guanine. Its pathway is tRNA modification; tRNA-queuosine biosynthesis. Functionally, catalyzes the base-exchange of a guanine (G) residue with the queuine precursor 7-aminomethyl-7-deazaguanine (PreQ1) at position 34 (anticodon wobble position) in tRNAs with GU(N) anticodons (tRNA-Asp, -Asn, -His and -Tyr). Catalysis occurs through a double-displacement mechanism. The nucleophile active site attacks the C1' of nucleotide 34 to detach the guanine base from the RNA, forming a covalent enzyme-RNA intermediate. The proton acceptor active site deprotonates the incoming PreQ1, allowing a nucleophilic attack on the C1' of the ribose to form the product. After dissociation, two additional enzymatic reactions on the tRNA convert PreQ1 to queuine (Q), resulting in the hypermodified nucleoside queuosine (7-(((4,5-cis-dihydroxy-2-cyclopenten-1-yl)amino)methyl)-7-deazaguanosine). In Anoxybacillus flavithermus (strain DSM 21510 / WK1), this protein is Queuine tRNA-ribosyltransferase.